The sequence spans 212 residues: Protein-L-isoaspartate O-methyltransferase (212 aa).

Serine 60 is an active-site residue.

It belongs to the methyltransferase superfamily. L-isoaspartyl/D-aspartyl protein methyltransferase family.

It localises to the cytoplasm. It carries out the reaction [protein]-L-isoaspartate + S-adenosyl-L-methionine = [protein]-L-isoaspartate alpha-methyl ester + S-adenosyl-L-homocysteine. In terms of biological role, catalyzes the methyl esterification of L-isoaspartyl residues in peptides and proteins that result from spontaneous decomposition of normal L-aspartyl and L-asparaginyl residues. It plays a role in the repair and/or degradation of damaged proteins. The protein is Protein-L-isoaspartate O-methyltransferase of Methylorubrum populi (strain ATCC BAA-705 / NCIMB 13946 / BJ001) (Methylobacterium populi).